The following is a 381-amino-acid chain: uncharacterized protein (381 aa).

11 consecutive transmembrane segments (helical) span residues 10–29 (IFFSLFGIFIFSCINAINFY), 75–93 (IILISLSLLIICTINLIIL), 98–117 (LIKINFILINFGIFSYFTSR), 130–147 (YLFLACIILLWAGGNLMV), 157–179 (TNNTIVICALLYCINILTEFLHY), 199–221 (IELQLLTGFVVSYITLNILWYYE), 236–255 (LILKYIFLTICFAIIPICYI), 262–284 (YFANLSLNIILLICFILLPIHGT), 289–311 (NILYIILIGNCLGAIFICNILIL), 323–340 (ALLSYFSMCSIGIYAGAL), and 355–374 (LFSVFAVVGSFVTYHFWYFI).

It is found in the cell membrane. This is an uncharacterized protein from Rickettsia prowazekii (strain Madrid E).